The following is a 470-amino-acid chain: Pre-mycofactocin glycosyltransferase (470 aa).

The helical transmembrane segment at 315–335 (LVISGGALMAWILMSIGTGLG) threads the bilayer.

Belongs to the glycosyltransferase 2 family.

The protein localises to the cell membrane. In terms of biological role, involved in the biosynthesis of the enzyme cofactor mycofactocin (MFT). Acts as a glycosyltransferase that catalyzes the oligoglycosylation of pre-mycofactocin (PMFT), adding up to nine beta-1,4-linked glucose residues. Is required for the in vivo ethanol assimilation in M.smegmatis. The protein is Pre-mycofactocin glycosyltransferase (mftF) of Mycobacterium tuberculosis (strain CDC 1551 / Oshkosh).